A 329-amino-acid chain; its full sequence is MWGLTVLLLPVVSFALYPEEILDTQWELWKKTYRKQYNSKGDEISRRLIWEKNLKHISIHNLEASLGVHTYELAMNHLGDMTSEEVVQKMTGLKVPASRSRSNDTLYIPDWEGRAPDSVDYRKKGYVTPVKNQGQCGSCWAFSSVGALEGQLKKKTGKLLNLSPQNLVDCVSENDGCGGGYMTNAFQYVQKNRGIDSEDAYPYVGQDENCMYNPTGKAAKCRGYREIPEGNEKALKRAVARVGPISVAIDASLTSFQFYRKGVYYDENCNSDNLNHAVLAVGYGIQKGNKHWIIKNSWGENWGNKGYILMARNKNNACGIANLASFPKM.

The first 15 residues, 1–15, serve as a signal peptide directing secretion; it reads MWGLTVLLLPVVSFA. Residues 16-114 constitute a propeptide, activation peptide; sequence LYPEEILDTQ…TLYIPDWEGR (99 aa). The N-linked (GlcNAc...) asparagine glycan is linked to N103. Intrachain disulfides connect C136-C177, C170-C210, and C269-C318. C139 is a catalytic residue. Residues H276 and N296 contribute to the active site.

It belongs to the peptidase C1 family.

The protein localises to the lysosome. Its subcellular location is the secreted. The protein resides in the apical cell membrane. The enzyme catalyses Broad proteolytic activity. With small-molecule substrates and inhibitors, the major determinant of specificity is P2, which is preferably Leu, Met &gt; Phe, and not Arg.. In terms of biological role, thiol protease involved in osteoclastic bone resorption and may participate partially in the disorder of bone remodeling. Displays potent endoprotease activity against fibrinogen at acid pH. May play an important role in extracellular matrix degradation. Involved in the release of thyroid hormone thyroxine (T4) by limited proteolysis of TG/thyroglobulin in the thyroid follicle lumen. This is Cathepsin K (CTSK) from Bos taurus (Bovine).